A 155-amino-acid chain; its full sequence is Ribosome maturation factor RimP (155 aa).

It belongs to the RimP family.

It localises to the cytoplasm. In terms of biological role, required for maturation of 30S ribosomal subunits. This is Ribosome maturation factor RimP from Phocaeicola vulgatus (strain ATCC 8482 / DSM 1447 / JCM 5826 / CCUG 4940 / NBRC 14291 / NCTC 11154) (Bacteroides vulgatus).